A 541-amino-acid polypeptide reads, in one-letter code: MERDDGGGGGLFFRGLQNRSHEKTKLRTRKSTLYLSPQKSTGRCGDLGENIYLVLFIIALRICNCFLVQTSFVPDEYWQSLEVAHRMVFNYGYLTWEWTERLRGYTYPLIFASIYKILHLLGKDSVHLLIWIPRLAQALLSAIADLRLYSLMKQLENQQVARWVFFCQLCSWFTWYCCTRTLTNTMETVLTIIALFYYPLEGSKSMNSVKYSSLVALAFIIRPTAVIPWIPLLFRHFWQEQRKLDLILHQFLPVGFVTLSLSLIIDRIFFGQWTLVQYNFLKFNVLQDLGSFYGSHPWHWYFSQGFPAVLGTHLPFFIHGCFLAPKRYRIFLVTVLWTLLVYSMLSHKEFRFIYPVLPFCMVFCGYSLNNLKTWKKPALSFLFLSNMLLALYTGLVHQRGTLDVMTNIQELSYNNTNVSSASVLMMMPCHSTPYYSHVHYPLPMRFLQCPPDLTGKTDYLVEADMFYLNPLKWLYMEFQNDSQLPTHLIMFSVLEEEISPFLISNNYERTAVFFHTHFPESRTGSHIYVYERKLKGKLNQR.

Asn-18 carries an N-linked (GlcNAc...) asparagine glycan. Transmembrane regions (helical) follow at residues 53 to 73 (LVLF…TSFV), 126 to 146 (VHLL…IADL), 182 to 202 (LTNT…PLEG), 214 to 234 (LVAL…PLLF), 245 to 265 (DLIL…SLII), 305 to 325 (GFPA…FLAP), 330 to 350 (IFLV…HKEF), 352 to 372 (FIYP…NNLK), and 377 to 397 (PALS…GLVH). Asn-417 carries N-linked (GlcNAc...) asparagine glycosylation.

The protein belongs to the glycosyltransferase 22 family. PIGB subfamily.

The protein localises to the endoplasmic reticulum membrane. The protein operates within glycolipid biosynthesis; glycosylphosphatidylinositol-anchor biosynthesis. Alpha-1,2-mannosyltransferase that catalyzes the transfer of the third mannose, via an alpha-1,2 bond, from a dolichol-phosphate-mannose (Dol-P-Man) to an alpha-D-Man-(1-&gt;6)-2-PEtn-alpha-D-Man-(1-&gt;4)-alpha-D-GlcN-(1-&gt;6)-(1-radyl,2-acyl-sn-glycero-3-phospho)-2-acyl-inositol intermediate to generate an alpha-D-Man-(1-&gt;2)-alpha-D-Man-(1-&gt;6)-2-PEtn-alpha-D-Man-(1-&gt;4)-alpha-D-GlcN-(1-&gt;6)-(1-radyl,2-acyl-sn-glycero-3-phospho)-2-acyl-inositol (also termed H6) and participates in the nineth step of the glycosylphosphatidylinositol-anchor biosynthesis. May also add the third mannose to an alpha-D-Man-(1-&gt;6)-alpha-D-Man-(1-&gt;4)-alpha-D-GlcN-(1-&gt;6)-(1-radyl,2-acyl-sn-glycero-3-phospho)-2-acyl-inositol (also termed H3) intermediate generating an alpha-D-Man-(1-&gt;2)-alpha-D-Man-(1-&gt;6)-alpha-D-Man-(1-&gt;4)-alpha-D-GlcN-(1-&gt;6)-(1-radyl,2-acyl-sn-glycero-3-phospho)-2-acyl-inositol (also termed H4). The sequence is that of GPI alpha-1,2-mannosyltransferase 3 from Bos taurus (Bovine).